A 357-amino-acid chain; its full sequence is Protein RecA (357 aa).

Residue 67–74 (GPESSGKT) coordinates ATP.

Belongs to the RecA family.

The protein localises to the cytoplasm. Its function is as follows. Can catalyze the hydrolysis of ATP in the presence of single-stranded DNA, the ATP-dependent uptake of single-stranded DNA by duplex DNA, and the ATP-dependent hybridization of homologous single-stranded DNAs. It interacts with LexA causing its activation and leading to its autocatalytic cleavage. This chain is Protein RecA, found in Leifsonia xyli subsp. xyli (strain CTCB07).